The primary structure comprises 417 residues: D-amino acid dehydrogenase (417 aa).

3–17 (AVVLGSGVVGLMSAW) contacts FAD.

The protein belongs to the DadA oxidoreductase family. It depends on FAD as a cofactor.

The catalysed reaction is a D-alpha-amino acid + A + H2O = a 2-oxocarboxylate + AH2 + NH4(+). In terms of biological role, oxidative deamination of D-amino acids. The chain is D-amino acid dehydrogenase from Vibrio vulnificus (strain CMCP6).